The following is a 108-amino-acid chain: Holo-[acyl-carrier-protein] synthase (108 aa).

Mg(2+)-binding residues include Asp9 and Glu52.

It belongs to the P-Pant transferase superfamily. AcpS family. Mg(2+) is required as a cofactor.

The protein resides in the cytoplasm. It carries out the reaction apo-[ACP] + CoA = holo-[ACP] + adenosine 3',5'-bisphosphate + H(+). Transfers the 4'-phosphopantetheine moiety from coenzyme A to a Ser of acyl-carrier-protein. The polypeptide is Holo-[acyl-carrier-protein] synthase (Coprothermobacter proteolyticus (strain ATCC 35245 / DSM 5265 / OCM 4 / BT)).